The primary structure comprises 152 residues: 1,4-dihydroxy-2-naphthoyl-CoA hydrolase (152 aa).

Aspartate 20 is a catalytic residue.

This sequence belongs to the 4-hydroxybenzoyl-CoA thioesterase family. DHNA-CoA hydrolase subfamily.

It carries out the reaction 1,4-dihydroxy-2-naphthoyl-CoA + H2O = 1,4-dihydroxy-2-naphthoate + CoA + H(+). The protein operates within cofactor biosynthesis; phylloquinone biosynthesis. Its pathway is quinol/quinone metabolism; 1,4-dihydroxy-2-naphthoate biosynthesis; 1,4-dihydroxy-2-naphthoate from chorismate: step 7/7. Functionally, catalyzes the hydrolysis of 1,4-dihydroxy-2-naphthoyl-CoA (DHNA-CoA) to 1,4-dihydroxy-2-naphthoate (DHNA), a reaction involved in phylloquinone (vitamin K1) biosynthesis. This Synechococcus sp. (strain CC9311) protein is 1,4-dihydroxy-2-naphthoyl-CoA hydrolase.